A 436-amino-acid chain; its full sequence is UDP-N-acetylmuramate--L-alanine ligase (436 aa).

111-117 contributes to the ATP binding site; sequence GTHGKTS.

Belongs to the MurCDEF family.

The protein resides in the cytoplasm. The enzyme catalyses UDP-N-acetyl-alpha-D-muramate + L-alanine + ATP = UDP-N-acetyl-alpha-D-muramoyl-L-alanine + ADP + phosphate + H(+). Its pathway is cell wall biogenesis; peptidoglycan biosynthesis. Its function is as follows. Cell wall formation. This chain is UDP-N-acetylmuramate--L-alanine ligase, found in Pediococcus pentosaceus (strain ATCC 25745 / CCUG 21536 / LMG 10740 / 183-1w).